We begin with the raw amino-acid sequence, 478 residues long: NADH-ubiquinone oxidoreductase 49 kDa subunit, mitochondrial (478 aa).

A mitochondrion-targeting transit peptide spans 1–42 (MATTLFRLAGRNAKRHCMRQSTTIAHNLNSTRAFSASALRRY). Positions 341, 347, and 362 each coordinate [4Fe-4S] cluster.

This sequence belongs to the complex I 49 kDa subunit family. In terms of assembly, complex I is composed of about 40 different subunits. [4Fe-4S] cluster is required as a cofactor.

The protein localises to the mitochondrion inner membrane. It carries out the reaction a ubiquinone + NADH + 5 H(+)(in) = a ubiquinol + NAD(+) + 4 H(+)(out). In terms of biological role, core subunit of the mitochondrial membrane respiratory chain NADH dehydrogenase (Complex I) that is believed to belong to the minimal assembly required for catalysis. Complex I functions in the transfer of electrons from NADH to the respiratory chain. The immediate electron acceptor for the enzyme is believed to be ubiquinone. This Neurospora crassa (strain ATCC 24698 / 74-OR23-1A / CBS 708.71 / DSM 1257 / FGSC 987) protein is NADH-ubiquinone oxidoreductase 49 kDa subunit, mitochondrial (nuo-49).